The sequence spans 138 residues: Nucleoside diphosphate kinase (138 aa).

Residues lysine 11, phenylalanine 59, arginine 87, threonine 93, arginine 104, and asparagine 114 each coordinate ATP. The active-site Pros-phosphohistidine intermediate is the histidine 117.

This sequence belongs to the NDK family. The cofactor is Mg(2+).

The protein resides in the cytoplasm. It carries out the reaction a 2'-deoxyribonucleoside 5'-diphosphate + ATP = a 2'-deoxyribonucleoside 5'-triphosphate + ADP. It catalyses the reaction a ribonucleoside 5'-diphosphate + ATP = a ribonucleoside 5'-triphosphate + ADP. Its function is as follows. Major role in the synthesis of nucleoside triphosphates other than ATP. The ATP gamma phosphate is transferred to the NDP beta phosphate via a ping-pong mechanism, using a phosphorylated active-site intermediate. This Saccharolobus islandicus (strain Y.N.15.51 / Yellowstone #2) (Sulfolobus islandicus) protein is Nucleoside diphosphate kinase.